The chain runs to 88 residues: DNA-directed RNA polymerase subunit omega (88 aa).

Belongs to the RNA polymerase subunit omega family. The RNAP catalytic core consists of 2 alpha, 1 beta, 1 beta' and 1 omega subunit. When a sigma factor is associated with the core the holoenzyme is formed, which can initiate transcription.

It carries out the reaction RNA(n) + a ribonucleoside 5'-triphosphate = RNA(n+1) + diphosphate. Functionally, promotes RNA polymerase assembly. Latches the N- and C-terminal regions of the beta' subunit thereby facilitating its interaction with the beta and alpha subunits. The chain is DNA-directed RNA polymerase subunit omega from Yersinia pestis (strain Pestoides F).